A 630-amino-acid polypeptide reads, in one-letter code: Plastin-3 (630 aa).

EF-hand domains lie at 12-47 and 52-87; these read DELD…ANMP and KVRE…VKSS. Asp-25, Asn-27, Asn-29, Glu-36, Asp-65, Asn-67, Asp-69, Lys-71, and Glu-76 together coordinate Ca(2+). Actin-binding regions lie at residues 109–382 and 383–627; these read TSEL…ALTK and PENQ…GRGM. Calponin-homology (CH) domains lie at 123 to 239 and 267 to 378; these read EEEK…KIGL and LSPE…NKYP. A phosphoserine mark is found at Ser-268, Ser-293, Ser-326, and Ser-339. Position 391 is a phosphothreonine (Thr-391). 2 Calponin-homology (CH) domains span residues 397-506 and 518-627; these read TREE…RRYT and KATD…GRGM.

Monomer.

Its subcellular location is the cytoplasm. In terms of biological role, actin-bundling protein. The polypeptide is Plastin-3 (Pls3) (Rattus norvegicus (Rat)).